The sequence spans 55 residues: Large ribosomal subunit protein bL33 (55 aa).

The protein belongs to the bacterial ribosomal protein bL33 family.

The chain is Large ribosomal subunit protein bL33 from Dehalococcoides mccartyi (strain ATCC BAA-2100 / JCM 16839 / KCTC 5957 / BAV1).